A 293-amino-acid chain; its full sequence is MKIRIAARGSKLSRIQVDMLGEKLKKIGIEYEIIDIKTKADLFSTEPLSKLGKGVFEKEVNEAVLEGKADIAVHSMKDILSEINPSLEIFAVLKRDPPYDILIAEKNLDKLDSNITIGTSSIRRKNFLKYIKPEINTKDIRGNVDTRIRKYLSKEYQGLILAEASLKRLNMTMNYHRLNVYDFTPEANQGIIVALGRKKDEKIKEIFKEINHKDTLDEALAERAVISLVGGGCHSPIGVLFKKEGKEFYGIASYSDGKKKITVSISKPGDPYTIGSELGLLLKKEMKNEDIIP.

Cys-233 bears the S-(dipyrrolylmethanemethyl)cysteine mark.

It belongs to the HMBS family. Requires dipyrromethane as cofactor.

The catalysed reaction is 4 porphobilinogen + H2O = hydroxymethylbilane + 4 NH4(+). It participates in porphyrin-containing compound metabolism; protoporphyrin-IX biosynthesis; coproporphyrinogen-III from 5-aminolevulinate: step 2/4. Functionally, tetrapolymerization of the monopyrrole PBG into the hydroxymethylbilane pre-uroporphyrinogen in several discrete steps. The polypeptide is Probable porphobilinogen deaminase (Saccharolobus islandicus (strain Y.N.15.51 / Yellowstone #2) (Sulfolobus islandicus)).